A 496-amino-acid chain; its full sequence is Cytosol aminopeptidase (496 aa).

Residues Lys258 and Asp263 each coordinate Mn(2+). Lys270 is an active-site residue. Mn(2+) contacts are provided by Asp281, Asp340, and Glu342. Residue Arg344 is part of the active site.

Belongs to the peptidase M17 family. Requires Mn(2+) as cofactor.

It localises to the cytoplasm. It carries out the reaction Release of an N-terminal amino acid, Xaa-|-Yaa-, in which Xaa is preferably Leu, but may be other amino acids including Pro although not Arg or Lys, and Yaa may be Pro. Amino acid amides and methyl esters are also readily hydrolyzed, but rates on arylamides are exceedingly low.. The enzyme catalyses Release of an N-terminal amino acid, preferentially leucine, but not glutamic or aspartic acids.. In terms of biological role, presumably involved in the processing and regular turnover of intracellular proteins. Catalyzes the removal of unsubstituted N-terminal amino acids from various peptides. The chain is Cytosol aminopeptidase (pepA) from Helicobacter pylori (strain J99 / ATCC 700824) (Campylobacter pylori J99).